A 271-amino-acid chain; its full sequence is Thiazole synthase (271 aa).

Residue lysine 95 is the Schiff-base intermediate with DXP of the active site. 1-deoxy-D-xylulose 5-phosphate-binding positions include glycine 156, 182–183, and 204–205; these read AG and NT.

This sequence belongs to the ThiG family. In terms of assembly, homotetramer. Forms heterodimers with either ThiH or ThiS.

Its subcellular location is the cytoplasm. The enzyme catalyses [ThiS sulfur-carrier protein]-C-terminal-Gly-aminoethanethioate + 2-iminoacetate + 1-deoxy-D-xylulose 5-phosphate = [ThiS sulfur-carrier protein]-C-terminal Gly-Gly + 2-[(2R,5Z)-2-carboxy-4-methylthiazol-5(2H)-ylidene]ethyl phosphate + 2 H2O + H(+). Its pathway is cofactor biosynthesis; thiamine diphosphate biosynthesis. Functionally, catalyzes the rearrangement of 1-deoxy-D-xylulose 5-phosphate (DXP) to produce the thiazole phosphate moiety of thiamine. Sulfur is provided by the thiocarboxylate moiety of the carrier protein ThiS. In vitro, sulfur can be provided by H(2)S. This chain is Thiazole synthase, found in Yersinia pseudotuberculosis serotype O:1b (strain IP 31758).